A 152-amino-acid polypeptide reads, in one-letter code: Transcriptional regulator MraZ (152 aa).

SpoVT-AbrB domains follow at residues 5 to 52 and 81 to 124; these read ANAV…PLPE and AVDL…NEDA.

The protein belongs to the MraZ family. Forms oligomers.

The protein resides in the cytoplasm. Its subcellular location is the nucleoid. The polypeptide is Transcriptional regulator MraZ (Azotobacter vinelandii (strain DJ / ATCC BAA-1303)).